A 117-amino-acid chain; its full sequence is Ig heavy chain V region MOPC 47A (117 aa).

The Ig-like domain occupies 1 to 113 (EVKLVESGGG…FAYWGZGTLV (113 aa)).

This Mus musculus (Mouse) protein is Ig heavy chain V region MOPC 47A.